A 459-amino-acid chain; its full sequence is ERBB receptor feedback inhibitor 1 (459 aa).

The residue at position 2 (Ser-2) is an N-acetylserine. Residues Thr-126 and Thr-130 each carry the phosphothreonine modification. A disordered region spans residues Gln-227–Pro-352. A phosphoserine mark is found at Ser-250 and Ser-271. Residues Ser-264 to Ser-273 show a composition bias toward polar residues. A compositionally biased stretch (pro residues) spans Pro-282–Pro-291. Ser-300 bears the Phosphoserine mark. Over residues Asp-310–Leu-323 the composition is skewed to basic and acidic residues. Residues Ser-324–Ser-335 are compositionally biased toward polar residues. An interaction with EGFR and ERBB2 and regulation of EGFR activation region spans residues Ser-332 to Ala-361. Phosphoserine is present on Ser-458.

It belongs to the MIG6 family. Interacts with EGFR and ERBB2.

It localises to the cytoplasm. The protein resides in the cell membrane. The protein localises to the nucleus. Functionally, negative regulator of EGFR signaling in skin morphogenesis. Acts as a negative regulator for several EGFR family members, including ERBB2, ERBB3 and ERBB4. Inhibits EGFR catalytic activity by interfering with its dimerization. Inhibits autophosphorylation of EGFR, ERBB2 and ERBB4. Important for normal keratinocyte proliferation and differentiation. Plays a role in modulating the response to steroid hormones in the uterus. Required for normal response to progesterone in the uterus and for fertility. Mediates epithelial estrogen responses in the uterus by regulating ESR1 levels and activation. Important for regulation of endometrium cell proliferation. Important for normal prenatal and perinatal lung development. In Rattus norvegicus (Rat), this protein is ERBB receptor feedback inhibitor 1 (Errfi1).